Here is an 869-residue protein sequence, read N- to C-terminus: Sodium-dependent phosphate transporter (869 aa).

Residues methionine 1–glutamate 18 lie on the Extracellular side of the membrane. A helical transmembrane segment spans residues tyrosine 19–alanine 39. Residues asparagine 40–alanine 54 lie on the Cytoplasmic side of the membrane. Residues isoleucine 55–leucine 75 form a helical membrane-spanning segment. Over glycine 76–proline 97 the chain is Extracellular. The helical transmembrane segment at serine 98–alanine 118 threads the bilayer. At asparagine 119–histidine 120 the chain is on the cytoplasmic side. Residues leucine 121 to alanine 141 form a helical membrane-spanning segment. At serine 142 to alanine 154 the chain is on the extracellular side. The helical transmembrane segment at phenylalanine 155–phenylalanine 175 threads the bilayer. At valine 176–leucine 196 the chain is on the cytoplasmic side. A helical transmembrane segment spans residues tryptophan 197 to phenylalanine 217. Topologically, residues glutamate 218 to threonine 250 are extracellular. The chain crosses the membrane as a helical span at residues alanine 251–tyrosine 271. The Cytoplasmic portion of the chain corresponds to arginine 272–serine 720. 3 disordered regions span residues lysine 286–leucine 312, alanine 374–valine 401, and serine 453–arginine 571. A compositionally biased stretch (low complexity) spans serine 457–proline 481. Residues arginine 482 to proline 491 are compositionally biased toward pro residues. Low complexity predominate over residues arginine 492–serine 509. A compositionally biased stretch (basic and acidic residues) spans proline 556–arginine 571. A helical transmembrane segment spans residues proline 721–tyrosine 741. Residues arginine 742 to glycine 759 lie on the Extracellular side of the membrane. Residues phenylalanine 760–leucine 780 traverse the membrane as a helical segment. The Cytoplasmic segment spans residues serine 781 to glycine 837. The chain crosses the membrane as a helical span at residues glycine 838–phenylalanine 858. Residues serine 859–serine 869 lie on the Extracellular side of the membrane.

It belongs to the inorganic phosphate transporter (PiT) (TC 2.A.20) family.

It localises to the cell membrane. It is found in the vacuole membrane. The protein resides in the cytoplasmic vesicle membrane. It carries out the reaction 2 Na(+)(out) + phosphate(out) = 2 Na(+)(in) + phosphate(in). Sodium-phosphate symporter which preferentially transports the monovalent form of phosphate with a stoichiometry of two sodium ions per phosphate ion. Plays a role in stabilizing the cytosolic pH and osmoregulation. May be required for optimal virulence of parasites in vivo. The chain is Sodium-dependent phosphate transporter from Toxoplasma gondii (strain ATCC 50861 / VEG).